Here is a 131-residue protein sequence, read N- to C-terminus: Small ribosomal subunit protein uS8 (131 aa).

The protein belongs to the universal ribosomal protein uS8 family. In terms of assembly, part of the 30S ribosomal subunit. Contacts proteins S5 and S12.

Its function is as follows. One of the primary rRNA binding proteins, it binds directly to 16S rRNA central domain where it helps coordinate assembly of the platform of the 30S subunit. In Chlorobium luteolum (strain DSM 273 / BCRC 81028 / 2530) (Pelodictyon luteolum), this protein is Small ribosomal subunit protein uS8.